A 373-amino-acid chain; its full sequence is PqqA peptide cyclase (373 aa).

The Radical SAM core domain maps to 7–227 (ILNPVGLLAE…EVYAGVIVID (221 aa)). Residues Cys-21, Cys-25, and Cys-28 each coordinate [4Fe-4S] cluster.

Belongs to the radical SAM superfamily. PqqE family. Interacts with PqqD. The interaction is necessary for activity of PqqE. Requires [4Fe-4S] cluster as cofactor.

The catalysed reaction is [PQQ precursor protein] + S-adenosyl-L-methionine = E-Y cross-linked-[PQQ precursor protein] + 5'-deoxyadenosine + L-methionine + H(+). Its pathway is cofactor biosynthesis; pyrroloquinoline quinone biosynthesis. Catalyzes the cross-linking of a glutamate residue and a tyrosine residue in the PqqA protein as part of the biosynthesis of pyrroloquinoline quinone (PQQ). The polypeptide is PqqA peptide cyclase (Methylocella silvestris (strain DSM 15510 / CIP 108128 / LMG 27833 / NCIMB 13906 / BL2)).